The primary structure comprises 126 residues: Methylglyoxal synthase (126 aa).

An MGS-like domain is found at 1–126; the sequence is MADRKCLALI…AEQLIDFRRN (126 aa). Residues H12, K16, 38–41, and 59–60 contribute to the substrate site; these read TGTT and SG. D65 serves as the catalytic Proton donor/acceptor. H92 contacts substrate.

It belongs to the methylglyoxal synthase family.

It carries out the reaction dihydroxyacetone phosphate = methylglyoxal + phosphate. Its function is as follows. Catalyzes the formation of methylglyoxal from dihydroxyacetone phosphate. The sequence is that of Methylglyoxal synthase from Rhizobium meliloti (strain 1021) (Ensifer meliloti).